A 188-amino-acid polypeptide reads, in one-letter code: Protein GrpE (188 aa).

Positions Met1–Val10 are enriched in polar residues. A disordered region spans residues Met1–Met35. Residues Ala19 to Ala32 are compositionally biased toward low complexity.

It belongs to the GrpE family. In terms of assembly, homodimer.

It localises to the cytoplasm. Functionally, participates actively in the response to hyperosmotic and heat shock by preventing the aggregation of stress-denatured proteins, in association with DnaK and GrpE. It is the nucleotide exchange factor for DnaK and may function as a thermosensor. Unfolded proteins bind initially to DnaJ; upon interaction with the DnaJ-bound protein, DnaK hydrolyzes its bound ATP, resulting in the formation of a stable complex. GrpE releases ADP from DnaK; ATP binding to DnaK triggers the release of the substrate protein, thus completing the reaction cycle. Several rounds of ATP-dependent interactions between DnaJ, DnaK and GrpE are required for fully efficient folding. The protein is Protein GrpE of Azoarcus sp. (strain BH72).